Reading from the N-terminus, the 613-residue chain is UvrABC system protein C (613 aa).

A GIY-YIG domain is found at 29–107; the sequence is DVAGVYKMLG…IKTLKPKYNI (79 aa). The 36-residue stretch at 217 to 252 folds into the UVR domain; sequence KELQRELFDSMRKFSDNLDYESAMVYRDRLQALKSI.

This sequence belongs to the UvrC family. In terms of assembly, interacts with UvrB in an incision complex.

It localises to the cytoplasm. In terms of biological role, the UvrABC repair system catalyzes the recognition and processing of DNA lesions. UvrC both incises the 5' and 3' sides of the lesion. The N-terminal half is responsible for the 3' incision and the C-terminal half is responsible for the 5' incision. The sequence is that of UvrABC system protein C from Anaplasma marginale (strain St. Maries).